Reading from the N-terminus, the 179-residue chain is Oryzines biosynthesis cluster protein J (179 aa).

The Cupin type-2 domain maps to 88–148 (YVDYHPGCEP…NHCWRNPSKT (61 aa)).

It belongs to the oryJ family.

It functions in the pathway secondary metabolite biosynthesis. Functionally, part of the gene cluster that mediates the biosynthesis of oryzines, natural products with an unusual maleidride backbone. The two subunits of the fungal fatty acid synthase oryfasA and oryfasB probably form octenoic acid. This fatty acid is most likely activated by the acyl-CoA ligase oryP to give octenyl-CoA before the citrate synthase-like protein oryE catalyzes condensation with oxaloacetate to form tricarboxylic acid. The next steps of the pathways are conjectural, but a favorite possible route has been proposed, beginning with decarboxylation and concomitant dehydration by the decarboxylase oryM, followed by tautomerization, which may lead to the production of a diene intermediate. Reduction of this diene intermediate could give the known metabolite piliformic acid. On the pathway to oryzine B and oryzine A, however, hydroxylation of the diene by the alpha-ketoglutarate-dependent dioxygenase oryG and lactonisation by the lactonohydrolases oryH or oryL could give oryzine B directly. Finally, enoyl reduction by the dehydrogenase oryD would then convert oryzine B into oryzine A. The polypeptide is Oryzines biosynthesis cluster protein J (Aspergillus oryzae (strain ATCC 42149 / RIB 40) (Yellow koji mold)).